Here is a 44-residue protein sequence, read N- to C-terminus: Iota-conotoxin-like R11.11 (44 aa).

Disulfide bonds link C5/C19, C12/C22, C18/C27, and C21/C36. Residue R44 is a propeptide, removed by a carboxypeptidase.

The protein belongs to the conotoxin I1 superfamily. As to expression, expressed by the venom duct.

The protein resides in the secreted. Iota-conotoxins bind to voltage-gated sodium channels (Nav) and act as agonists by shifting the voltage-dependence of activation to more hyperpolarized levels. Produces general excitatory symptoms. The chain is Iota-conotoxin-like R11.11 from Conus radiatus (Rayed cone).